The primary structure comprises 29 residues: Brevinin-2Ed (29 aa).

Cys-23 and Cys-29 are disulfide-bonded.

This sequence belongs to the frog skin active peptide (FSAP) family. Brevinin subfamily. As to expression, expressed by the skin glands.

The protein localises to the secreted. Functionally, shows antibacterial activity against representative Gram-negative and Gram-positive bacterial species, and hemolytic activity. The chain is Brevinin-2Ed from Pelophylax lessonae (Pool frog).